The sequence spans 348 residues: Aspartate carbamoyltransferase catalytic subunit (348 aa).

Carbamoyl phosphate-binding residues include Arg57 and Thr58. Position 86 (Lys86) interacts with L-aspartate. Arg107, His135, and Gln138 together coordinate carbamoyl phosphate. Positions 172 and 234 each coordinate L-aspartate. Carbamoyl phosphate-binding residues include Leu274 and Pro275.

The protein belongs to the aspartate/ornithine carbamoyltransferase superfamily. ATCase family. As to quaternary structure, heterododecamer (2C3:3R2) of six catalytic PyrB chains organized as two trimers (C3), and six regulatory PyrI chains organized as three dimers (R2).

The enzyme catalyses carbamoyl phosphate + L-aspartate = N-carbamoyl-L-aspartate + phosphate + H(+). It participates in pyrimidine metabolism; UMP biosynthesis via de novo pathway; (S)-dihydroorotate from bicarbonate: step 2/3. Its function is as follows. Catalyzes the condensation of carbamoyl phosphate and aspartate to form carbamoyl aspartate and inorganic phosphate, the committed step in the de novo pyrimidine nucleotide biosynthesis pathway. This chain is Aspartate carbamoyltransferase catalytic subunit, found in Dichelobacter nodosus (strain VCS1703A).